Consider the following 459-residue polypeptide: UDP-N-acetylmuramoylalanine--D-glutamate ligase (459 aa).

119–125 (GTNGKTT) contributes to the ATP binding site.

The protein belongs to the MurCDEF family.

The protein localises to the cytoplasm. The catalysed reaction is UDP-N-acetyl-alpha-D-muramoyl-L-alanine + D-glutamate + ATP = UDP-N-acetyl-alpha-D-muramoyl-L-alanyl-D-glutamate + ADP + phosphate + H(+). Its pathway is cell wall biogenesis; peptidoglycan biosynthesis. Cell wall formation. Catalyzes the addition of glutamate to the nucleotide precursor UDP-N-acetylmuramoyl-L-alanine (UMA). The protein is UDP-N-acetylmuramoylalanine--D-glutamate ligase of Lactiplantibacillus plantarum (strain ATCC BAA-793 / NCIMB 8826 / WCFS1) (Lactobacillus plantarum).